The chain runs to 342 residues: (Lyso)-N-acylphosphatidylethanolamine lipase (342 aa).

Residues 70 to 201 form the AB hydrolase-1 domain; sequence PLVMVHGFGG…KAVASVLGRS (132 aa).

The protein belongs to the peptidase S33 family. ABHD4/ABHD5 subfamily.

It catalyses the reaction N-hexadecanoyl-1,2-di-(9Z-octadecenoyl)-sn-glycero-3-phosphoethanolamine + H2O = N-hexadecanoyl-1-(9Z-octadecenoyl)-sn-glycero-3-phosphoethanolamine + (9Z)-octadecenoate + H(+). It carries out the reaction an N-acyl-1,2-diacyl-sn-glycero-3-phosphoethanolamine + H2O = N,1-diacyl-sn-glycero-3-phosphoethanolamine + a fatty acid + H(+). The catalysed reaction is N-hexadecanoyl-1-(9Z-octadecenoyl)-sn-glycero-3-phosphoethanolamine + H2O = N-hexadecanoyl-sn-glycero-3-phosphoethanolamine + (9Z)-octadecenoate + H(+). The enzyme catalyses N-octadecanoyl-1-(9Z-octadecenoyl)-sn-glycero-3-phosphoethanolamine + H2O = N-octadecanoyl-sn-glycero-3-phospho-ethanolamine + (9Z)-octadecenoate + H(+). It catalyses the reaction N-eicosanoyl-1-(9Z-octadecenoyl)-sn-glycero-3-phosphoethanolamine + H2O = N-eicosanoyl-sn-glycero-3-phosphoethanolamine + (9Z)-octadecenoate + H(+). It carries out the reaction N,1-di-(9Z-octadecenoyl)-sn-glycero-3-phosphoethanolamine + H2O = N-(9Z-octadecenoyl)-sn-glycero-3-phosphoethanolamine + (9Z)-octadecenoate + H(+). The catalysed reaction is N-(5Z,8Z,11Z,14Z-eicosatetraenoyl)-1-(9Z-octadecenoyl)-sn-glycero-3-phosphoethanolamine + H2O = N-(5Z,8Z,11Z,14Z-eicosatetraenoyl)-sn-glycero-3-phosphoethanolamine + (9Z)-octadecenoate + H(+). The enzyme catalyses 1-octadecanoyl-2-(9Z-octadecenoyl)-sn-glycero-3-phospho-(N-hexadecanoyl)-serine + H2O = 1-octadecanoyl-2-hydroxy-sn-glycero-3-phospho-(N-hexadecanoyl)-serine + (9Z)-octadecenoate + H(+). It catalyses the reaction 1-O-(1Z-octadecenoyl)-2-(9Z-octadecenoyl)-sn-glycero-3-phospho-N-hexadecanoyl-ethanolamine + H2O = 1-O-(1Z-octadecenyl)-sn-glycero-3-phospho-N-hexadecanoyl-ethanolamine + (9Z)-octadecenoate + H(+). It carries out the reaction N,1-diacyl-sn-glycero-3-phosphoethanolamine + H2O = N-acyl-sn-glycero-3-phosphoethanolamine + a fatty acid + H(+). Functionally, lysophospholipase selective for N-acyl phosphatidylethanolamine (NAPE). Contributes to the biosynthesis of N-acyl ethanolamines, including the endocannabinoid anandamide by hydrolyzing the sn-1 and sn-2 acyl chains from N-acyl phosphatidylethanolamine (NAPE) generating glycerophospho-N-acyl ethanolamine (GP-NAE), an intermediate for N-acyl ethanolamine biosynthesis. Hydrolyzes substrates bearing saturated, monounsaturated, polyunsaturated N-acyl chains. Shows no significant activity towards other lysophospholipids, including lysophosphatidylcholine, lysophosphatidylethanolamine and lysophosphatidylserine. The sequence is that of (Lyso)-N-acylphosphatidylethanolamine lipase from Homo sapiens (Human).